The following is a 212-amino-acid chain: Ras-related protein RABC1 (212 aa).

At Gly-2 the chain carries N-acetylglycine. A GTP-binding site is contributed by 20–27; it reads GDSGVGKS. Positions 41–49 match the Effector region motif; it reads LSPTIGVDF. Residues 67 to 71, 127 to 130, and 157 to 158 each bind GTP; these read DTAGQ, NKVD, and SA. The tract at residues 182–212 is disordered; the sequence is TAEGSSGGKKNIFKQNPAQTTSTSSSYCCSS. The span at 201–212 shows a compositional bias: low complexity; that stretch reads TTSTSSSYCCSS. S-geranylgeranyl cysteine attachment occurs at residues Cys-209 and Cys-210.

It belongs to the small GTPase superfamily. Rab family.

The protein localises to the cell membrane. In terms of biological role, intracellular vesicle trafficking and protein transport. This is Ras-related protein RABC1 (RABC1) from Arabidopsis thaliana (Mouse-ear cress).